Reading from the N-terminus, the 35-residue chain is Manganese peroxidase (35 aa).

Positions 1–11 (LSLLGHDERVT) are enriched in basic and acidic residues. The disordered stretch occupies residues 1–35 (LSLLGHDERVTPEPFDSVTAQNARGNQADVQSLPR). The span at 18–35 (VTAQNARGNQADVQSLPR) shows a compositional bias: polar residues.

The protein belongs to the peroxidase family. The cofactor is heme b. Ca(2+) serves as cofactor.

The catalysed reaction is 2 Mn(2+) + H2O2 + 2 H(+) = 2 Mn(3+) + 2 H2O. Its function is as follows. Has manganese peroxidase activity. This chain is Manganese peroxidase, found in Irpex lacteus (Milk-white toothed polypore).